Reading from the N-terminus, the 98-residue chain is Alpha-elicitin MGM-alpha (98 aa).

Disulfide bonds link Cys-3–Cys-71, Cys-27–Cys-56, and Cys-51–Cys-95.

The protein belongs to the elicitin family.

The protein localises to the secreted. In terms of biological role, induces local and distal defense responses (incompatible hypersensitive reaction) in plants from the solanaceae and cruciferae families. Elicits leaf necrosis and causes the accumulation of pathogenesis-related proteins. Might interact with the lipidic molecules of the plasma membrane. The chain is Alpha-elicitin MGM-alpha from Phytophthora megasperma (Potato pink rot fungus).